The sequence spans 539 residues: uncharacterized protein (539 aa).

6–20 (LIIGGGGAAARAAIE) lines the FAD pocket. Catalysis depends on residues histidine 227 and arginine 243.

Belongs to the FAD-dependent oxidoreductase 2 family. FRD/SDH subfamily. FAD is required as a cofactor.

This is an uncharacterized protein from Methanocaldococcus jannaschii (strain ATCC 43067 / DSM 2661 / JAL-1 / JCM 10045 / NBRC 100440) (Methanococcus jannaschii).